Consider the following 339-residue polypeptide: D-erythrose-4-phosphate dehydrogenase (339 aa).

12–13 (RI) is a binding site for NAD(+). Substrate contacts are provided by residues 154-156 (SCT), arginine 200, 213-214 (TK), and arginine 236. Cysteine 155 (nucleophile) is an active-site residue. NAD(+) is bound at residue asparagine 318.

This sequence belongs to the glyceraldehyde-3-phosphate dehydrogenase family. Epd subfamily. In terms of assembly, homotetramer.

Its subcellular location is the cytoplasm. The catalysed reaction is D-erythrose 4-phosphate + NAD(+) + H2O = 4-phospho-D-erythronate + NADH + 2 H(+). It functions in the pathway cofactor biosynthesis; pyridoxine 5'-phosphate biosynthesis; pyridoxine 5'-phosphate from D-erythrose 4-phosphate: step 1/5. Its function is as follows. Catalyzes the NAD-dependent conversion of D-erythrose 4-phosphate to 4-phosphoerythronate. This Proteus mirabilis (strain HI4320) protein is D-erythrose-4-phosphate dehydrogenase.